We begin with the raw amino-acid sequence, 330 residues long: Thioredoxin domain-containing protein 6 (330 aa).

A Thioredoxin domain is found at 11 to 115; it reads QVNISTQELW…QKTILDQLEA (105 aa). An NDK region spans residues 157–303; it reads ERTCTLAIIK…LFPSLKFSDK (147 aa). The tract at residues 300 to 330 is disordered; the sequence is FSDKDTEAPQGGEAEATAGPTEALCFPEDVD. Over residues 307-322 the composition is skewed to low complexity; the sequence is APQGGEAEATAGPTEA.

This sequence belongs to the NDK family. As to quaternary structure, monomer and homodimer. Detected at very low levels in testis, lung and brain.

The protein resides in the cytoplasm. It localises to the cytoskeleton. It is found in the cilium axoneme. The protein localises to the dynein axonemal particle. Functionally, may be a regulator of microtubule physiology. The sequence is that of Thioredoxin domain-containing protein 6 from Homo sapiens (Human).